We begin with the raw amino-acid sequence, 191 residues long: Protein LIGHT-DEPENDENT SHORT HYPOCOTYLS 9 (191 aa).

The segment covering 1 to 14 (MSSDRHTPTKDPPD) has biased composition (basic and acidic residues). Disordered regions lie at residues 1 to 41 (MSSD…YESQ) and 153 to 191 (QAKA…QSFT). The ALOG domain maps to 37–165 (RYESQKRRDW…ARGIPYRKKK (129 aa)). The span at 160–169 (PYRKKKRRKT) shows a compositional bias: basic residues. The Nuclear localization signal signature appears at 163–167 (KKKRR). Residues 181–191 (ANSSTPNQSFT) are compositionally biased toward polar residues.

This sequence belongs to the plant homeotic and developmental regulators ALOG protein family.

The protein resides in the nucleus. In terms of biological role, probable transcription regulator that acts as a developmental regulator by promoting cell growth in response to light. This chain is Protein LIGHT-DEPENDENT SHORT HYPOCOTYLS 9 (LSH9), found in Arabidopsis thaliana (Mouse-ear cress).